A 416-amino-acid polypeptide reads, in one-letter code: Exodeoxyribonuclease 7 large subunit (416 aa).

The tract at residues 1-21 is disordered; it reads MTEPDSKPKKGRAGRKKAEPV.

Belongs to the XseA family. In terms of assembly, heterooligomer composed of large and small subunits.

It is found in the cytoplasm. It catalyses the reaction Exonucleolytic cleavage in either 5'- to 3'- or 3'- to 5'-direction to yield nucleoside 5'-phosphates.. Functionally, bidirectionally degrades single-stranded DNA into large acid-insoluble oligonucleotides, which are then degraded further into small acid-soluble oligonucleotides. The protein is Exodeoxyribonuclease 7 large subunit of Deinococcus radiodurans (strain ATCC 13939 / DSM 20539 / JCM 16871 / CCUG 27074 / LMG 4051 / NBRC 15346 / NCIMB 9279 / VKM B-1422 / R1).